The sequence spans 55 residues: MYNAPPPQDMSYYEHCQKRHEEKGCLYACIFTALCCFCCYETCECCLDCLCCCCN.

A helical membrane pass occupies residues 24–40 (GCLYACIFTALCCFCCY).

The protein belongs to the CYSTM1 family.

The protein resides in the cell membrane. The protein localises to the secreted. It is found in the cell wall. Its function is as follows. Confers resistance to heavy metal ions (e.g. cadmium (CdCl(2)) and copper (CuCl(2))) by chelating them at the plasma membrane of root cells, thus stopping their entry and reducing their accumulation. In Digitaria ciliaris (Southern crabgrass), this protein is Protein CADMIUM TOLERANCE 1.